Consider the following 418-residue polypeptide: Tyrosine--tRNA ligase (418 aa).

Position 34 (Tyr34) interacts with L-tyrosine. The 'HIGH' region signature appears at 39–48 (PTADSLHLGH). Tyr169 and Gln173 together coordinate L-tyrosine. The 'KMSKS' region motif lies at 229–233 (KFGKS). Lys232 serves as a coordination point for ATP. The S4 RNA-binding domain occupies 352–418 (NNIVELLVSS…GKKKYFVLTY (67 aa)).

Belongs to the class-I aminoacyl-tRNA synthetase family. TyrS type 1 subfamily. Homodimer.

The protein resides in the cytoplasm. The catalysed reaction is tRNA(Tyr) + L-tyrosine + ATP = L-tyrosyl-tRNA(Tyr) + AMP + diphosphate + H(+). Its function is as follows. Catalyzes the attachment of tyrosine to tRNA(Tyr) in a two-step reaction: tyrosine is first activated by ATP to form Tyr-AMP and then transferred to the acceptor end of tRNA(Tyr). This chain is Tyrosine--tRNA ligase, found in Streptococcus pneumoniae (strain CGSP14).